Consider the following 476-residue polypeptide: Tryptophan--tRNA ligase, cytoplasmic (476 aa).

Residues Met1–Ile117 are dispensable to the catalytic activity. The region spanning Ser13–Pro69 is the WHEP-TRS domain. Positions Tyr63–Thr83 are disordered. N6-succinyllysine is present on Lys159. Positions Pro169–His178 match the 'HIGH' region motif. A 'KMSKS' region motif is present at residues Lys354 to Ser358. A Phosphoserine modification is found at Ser356.

The protein belongs to the class-I aminoacyl-tRNA synthetase family. In terms of assembly, homodimer. Interacts with oxidized form of GAPDH. Proteolytic cleavage generates 2 forms; T1-TrpRS and T2-TrpRS.

The protein resides in the cytoplasm. It carries out the reaction tRNA(Trp) + L-tryptophan + ATP = L-tryptophyl-tRNA(Trp) + AMP + diphosphate + H(+). T1-TrpRS has aminoacylation activity while T2-TrpRS lacks it. T1-TrpRS and T2-TrpRS possess angiostatic activity. T2-TrpRS inhibits fluid shear stress-activated responses of endothelial cells. Regulates ERK, Akt, and eNOS activation pathways that are associated with angiogenesis, cytoskeletal reorganization and shear stress-responsive gene expression. In Bos taurus (Bovine), this protein is Tryptophan--tRNA ligase, cytoplasmic (WARS1).